Here is a 307-residue protein sequence, read N- to C-terminus: Elongation factor Ts (307 aa).

An involved in Mg(2+) ion dislocation from EF-Tu region spans residues 79–82; it reads TDFV.

This sequence belongs to the EF-Ts family.

The protein localises to the cytoplasm. Its function is as follows. Associates with the EF-Tu.GDP complex and induces the exchange of GDP to GTP. It remains bound to the aminoacyl-tRNA.EF-Tu.GTP complex up to the GTP hydrolysis stage on the ribosome. In Bartonella bacilliformis (strain ATCC 35685 / KC583 / Herrer 020/F12,63), this protein is Elongation factor Ts.